Reading from the N-terminus, the 340-residue chain is Uroporphyrinogen decarboxylase (340 aa).

Substrate contacts are provided by residues 23–27 (RQAGR), aspartate 72, tyrosine 147, threonine 202, and histidine 316.

This sequence belongs to the uroporphyrinogen decarboxylase family. As to quaternary structure, homodimer.

It localises to the cytoplasm. The catalysed reaction is uroporphyrinogen III + 4 H(+) = coproporphyrinogen III + 4 CO2. It participates in porphyrin-containing compound metabolism; protoporphyrin-IX biosynthesis; coproporphyrinogen-III from 5-aminolevulinate: step 4/4. Its function is as follows. Catalyzes the decarboxylation of four acetate groups of uroporphyrinogen-III to yield coproporphyrinogen-III. This is Uroporphyrinogen decarboxylase from Pelobacter propionicus (strain DSM 2379 / NBRC 103807 / OttBd1).